The following is a 145-amino-acid chain: 3-dehydroquinate dehydratase (145 aa).

The Proton acceptor role is filled by Tyr-24. The substrate site is built by Asn-75, His-81, and Asp-88. The active-site Proton donor is His-101. Residues 102 to 103 (IS) and Arg-112 contribute to the substrate site.

It belongs to the type-II 3-dehydroquinase family. As to quaternary structure, homododecamer.

It catalyses the reaction 3-dehydroquinate = 3-dehydroshikimate + H2O. Its pathway is metabolic intermediate biosynthesis; chorismate biosynthesis; chorismate from D-erythrose 4-phosphate and phosphoenolpyruvate: step 3/7. Its function is as follows. Catalyzes a trans-dehydration via an enolate intermediate. This chain is 3-dehydroquinate dehydratase, found in Rhizobium etli (strain CIAT 652).